Here is a 758-residue protein sequence, read N- to C-terminus: Dolichyl-phosphooligosaccharide-protein glycotransferase 2 (758 aa).

Topologically, residues 1–6 (MKRRYS) are cytoplasmic. Residues 7–27 (ILIILLVAIFYRMITFRFKYL) form a helical membrane-spanning segment. Topologically, residues 28–92 (LGYDPYFHLA…KVFGVSLTTT (65 aa)) are extracellular. The DXD motif 1 signature appears at 29-31 (GYD). A Mn(2+)-binding site is contributed by D31. Residues 93–113 (FKITPVIFGVLTVIFLYLSLL) traverse the membrane as a helical segment. The Cytoplasmic segment spans residues 114-120 (KLYDEKR). Residues 121-141 (AFFGGFFLAISYGHVFRSMAN) traverse the membrane as a helical segment. Over 142-145 (YYRG) the chain is Extracellular. Positions 144 and 146 each coordinate Mn(2+). Positions 144-146 (RGD) match the DXD motif 2 motif. Residues 146–166 (DNYMLFWYSVALLGISLALGI) form a helical membrane-spanning segment. The Cytoplasmic segment spans residues 167-175 (KKGKWKYKR). The next 2 membrane-spanning stretches (helical) occupy residues 176 to 196 (LIFYTLPVLASGFSAIFWQAY) and 197 to 217 (YPIFAFLLSNALLLAVGAFIL). The Cytoplasmic portion of the chain corresponds to 218–226 (KKDKYLLDS). The helical transmembrane segment at 227–247 (IILILSTAFGVLLANYLGGIF) threads the bilayer. Over 248 to 281 (GYGMLGYAKWLGKSVAKKLGLEFGYLKDVYLILH) the chain is Extracellular. A helical transmembrane segment spans residues 282–302 (LKYLVPISLSFVLVLILLGFL). Residues 303–310 (TKDIRIRS) are Cytoplasmic-facing. A helical transmembrane segment spans residues 311-331 (LFLGIASFIGIIILFKRFEAL). At 332–352 (KELSTGFGIFKEAPILETQPT) the chain is on the extracellular side. The short motif at 340–343 (IFKE) is the TIXE motif element. A helical membrane pass occupies residues 353–373 (SFKDLWAAFSLSFFLTPLFFI). Topologically, residues 374 to 379 (RFKKPR) are cytoplasmic. The helical transmembrane segment at 380–400 (VEDFLTLGLIIPSVYMLKTWT) threads the bilayer. Position 401 (R401) is a topological domain, extracellular. Residue R401 coordinates a glycophospholipid. The chain crosses the membrane as a helical span at residues 402 to 422 (FLFIGSMAIAIMSGIGIVELY). Residues 423–433 (EAIKPRLNGKK) are Cytoplasmic-facing. A helical membrane pass occupies residues 434-454 (ALATGIITLVILPGVIAGLSF). Residues 455-758 (KEVCSLHPEM…DRGVFRLSYN (304 aa)) are Extracellular-facing. An interacts with target acceptor peptide in protein substrate region spans residues 488 to 490 (WWD). The WWDYG motif motif lies at 488–492 (WWDWG). Positions 540-547 (DFLKFGAI) match the DK motif motif.

The protein belongs to the STT3 family. Requires Mn(2+) as cofactor. Mg(2+) is required as a cofactor.

The protein localises to the cell membrane. The enzyme catalyses an archaeal dolichyl phosphooligosaccharide + [protein]-L-asparagine = an archaeal dolichyl phosphate + a glycoprotein with the oligosaccharide chain attached by N-beta-D-glycosyl linkage to a protein L-asparagine.. Its pathway is protein modification; protein glycosylation. In terms of biological role, oligosaccharyl transferase (OST) that catalyzes the initial transfer of a defined glycan (ManNAcXyl(2)GlcAMan(2)GalNAc in Pyrococcus) from the lipid carrier dolichol-monophosphate to an asparagine residue within an Asn-X-Ser/Thr consensus motif in nascent polypeptide chains, the first step in protein N-glycosylation. In Pyrococcus horikoshii (strain ATCC 700860 / DSM 12428 / JCM 9974 / NBRC 100139 / OT-3), this protein is Dolichyl-phosphooligosaccharide-protein glycotransferase 2 (aglB2).